Reading from the N-terminus, the 101-residue chain is Ubiquitin-related modifier 1 (101 aa).

At G101 the chain carries 1-thioglycine. A Glycyl lysine isopeptide (Gly-Lys) (interchain with K-? in acceptor proteins) cross-link involves residue G101.

It belongs to the URM1 family. Post-translationally, C-terminal thiocarboxylation occurs in 2 steps, it is first acyl-adenylated (-COAMP) via the hesA/moeB/thiF part of UBA4, then thiocarboxylated (-COSH) via the rhodanese domain of UBA4.

Its subcellular location is the cytoplasm. It participates in tRNA modification; 5-methoxycarbonylmethyl-2-thiouridine-tRNA biosynthesis. Its function is as follows. Acts as a sulfur carrier required for 2-thiolation of mcm(5)S(2)U at tRNA wobble positions of cytosolic tRNA(Lys), tRNA(Glu) and tRNA(Gln). Serves as sulfur donor in tRNA 2-thiolation reaction by being thiocarboxylated (-COSH) at its C-terminus by the MOCS3 homolog UBA4. The sulfur is then transferred to tRNA to form 2-thiolation of mcm(5)S(2)U. Prior mcm(5) tRNA modification by the elongator complex is required for 2-thiolation. Also acts as a ubiquitin-like protein (UBL) that is covalently conjugated via an isopeptide bond to lysine residues of target proteins such as AHP1. The thiocarboxylated form serves as substrate for conjugation and oxidative stress specifically induces the formation of UBL-protein conjugates. The sequence is that of Ubiquitin-related modifier 1 from Candida albicans (strain SC5314 / ATCC MYA-2876) (Yeast).